We begin with the raw amino-acid sequence, 176 residues long: NAD(P)H-quinone oxidoreductase subunit I, chloroplastic (176 aa).

2 consecutive 4Fe-4S ferredoxin-type domains span residues 55–84 (GRIHFEFDKCIACEVCVRVCPIDLPVVDWE) and 95–124 (LNYSIDFGICIFCGNCVEYCPTNCLSMTEE). 8 residues coordinate [4Fe-4S] cluster: C64, C67, C70, C74, C104, C107, C110, and C114.

This sequence belongs to the complex I 23 kDa subunit family. NDH is composed of at least 16 different subunits, 5 of which are encoded in the nucleus. Requires [4Fe-4S] cluster as cofactor.

Its subcellular location is the plastid. It localises to the chloroplast thylakoid membrane. It carries out the reaction a plastoquinone + NADH + (n+1) H(+)(in) = a plastoquinol + NAD(+) + n H(+)(out). The catalysed reaction is a plastoquinone + NADPH + (n+1) H(+)(in) = a plastoquinol + NADP(+) + n H(+)(out). In terms of biological role, NDH shuttles electrons from NAD(P)H:plastoquinone, via FMN and iron-sulfur (Fe-S) centers, to quinones in the photosynthetic chain and possibly in a chloroplast respiratory chain. The immediate electron acceptor for the enzyme in this species is believed to be plastoquinone. Couples the redox reaction to proton translocation, and thus conserves the redox energy in a proton gradient. The polypeptide is NAD(P)H-quinone oxidoreductase subunit I, chloroplastic (Populus trichocarpa (Western balsam poplar)).